The sequence spans 470 residues: Macrophage metalloelastase (470 aa).

The signal sequence occupies residues 1-16 (MKFLLILLLQATASGA). A propeptide spans 17 to 105 (LPLNSSTSLE…DVHHFREMPG (89 aa)) (activation peptide). Asn-20 carries an N-linked (GlcNAc...) asparagine glycan. The Cysteine switch signature appears at 90-97 (PRCGVPDV). Cys-92 serves as a coordination point for Zn(2+). Residues Asp-124 and Asp-158 each coordinate Ca(2+). Zn(2+) is bound by residues His-168 and Asp-170. Ca(2+) is bound by residues Asp-175, Gly-176, Gly-178, and Ile-180. Residue His-183 participates in Zn(2+) binding. Positions 190, 192, and 194 each coordinate Ca(2+). His-196 contributes to the Zn(2+) binding site. Residues Asp-198, Glu-199, and Glu-201 each coordinate Ca(2+). Residue His-218 coordinates Zn(2+). Glu-219 is a catalytic residue. Zn(2+)-binding residues include His-222 and His-228. Hemopexin repeat units follow at residues 279 to 328 (PALC…WPTL), 329 to 375 (PSGI…GFPN), 377 to 425 (VKKI…FQGI), and 426 to 470 (GPKI…WFGC). Cys-282 and Cys-470 form a disulfide bridge. Asn-285 is a glycosylation site (N-linked (GlcNAc...) asparagine). Ca(2+)-binding residues include Asp-289, Glu-333, Asp-381, and Asp-430.

This sequence belongs to the peptidase M10A family. Requires Ca(2+) as cofactor. The cofactor is Zn(2+). As to expression, found in alveolar macrophages but not in peripheral blood monocytes.

It is found in the secreted. It localises to the extracellular space. The protein localises to the extracellular matrix. It catalyses the reaction Hydrolysis of soluble and insoluble elastin. Specific cleavages are also produced at 14-Ala-|-Leu-15 and 16-Tyr-|-Leu-17 in the B chain of insulin.. In terms of biological role, may be involved in tissue injury and remodeling. Has significant elastolytic activity. Can accept large and small amino acids at the P1' site, but has a preference for leucine. Aromatic or hydrophobic residues are preferred at the P1 site, with small hydrophobic residues (preferably alanine) occupying P3. This Homo sapiens (Human) protein is Macrophage metalloelastase (MMP12).